The chain runs to 504 residues: Sodium/proline symporter (504 aa).

The next 13 helical transmembrane spans lie at 8–28 (LITFTIYIFGMLLIGVLAYYY), 50–70 (SAGASDMSGWLLMGLPGAVYL), 73–93 (LVEGWIAIGLTIGAYFNWLLV), 127–147 (LVSATIILVFLTIYCASGVVA), 163–183 (ALWYGAAATIAYTFIGGFLAV), 189–209 (IQATLMIFALILTPVFVLLSF), 240–260 (LGLLSLAAWGLGYFGQPHILA), 281–301 (WMVLCLAGAIGIGLFAIPYFF), 324–344 (LLFNPWIAGILLSAILAAVMS), 374–394 (ELVWLGRIMVLVIAALAIWIA), 405–425 (VEFAWAGFGSAFGPVVLFSLF), 434–454 (AMAGMLVGAVTVFAWKEVVPA), and 461–481 (VYEMIPGFAFASLAIIVISLL).

This sequence belongs to the sodium:solute symporter (SSF) (TC 2.A.21) family.

It localises to the cell inner membrane. The catalysed reaction is L-proline(in) + Na(+)(in) = L-proline(out) + Na(+)(out). In terms of biological role, catalyzes the sodium-dependent uptake of extracellular L-proline. This chain is Sodium/proline symporter (putP), found in Haemophilus influenzae (strain ATCC 51907 / DSM 11121 / KW20 / Rd).